The chain runs to 449 residues: Bifunctional protein GlmU (449 aa).

The segment at methionine 1–arginine 229 is pyrophosphorylase. UDP-N-acetyl-alpha-D-glucosamine is bound by residues leucine 8 to glycine 11, lysine 22, glutamine 72, and glycine 77 to threonine 78. Mg(2+) is bound at residue aspartate 102. Residues glycine 139, glutamate 154, asparagine 169, and asparagine 227 each coordinate UDP-N-acetyl-alpha-D-glucosamine. Residue asparagine 227 participates in Mg(2+) binding. The linker stretch occupies residues valine 230–glutamine 250. The N-acetyltransferase stretch occupies residues glycine 251–arginine 449. UDP-N-acetyl-alpha-D-glucosamine is bound by residues arginine 332 and lysine 350. Histidine 362 acts as the Proton acceptor in catalysis. Residues tyrosine 365 and asparagine 376 each contribute to the UDP-N-acetyl-alpha-D-glucosamine site. Residues asparagine 385–tyrosine 386, alanine 422, and arginine 439 contribute to the acetyl-CoA site.

This sequence in the N-terminal section; belongs to the N-acetylglucosamine-1-phosphate uridyltransferase family. In the C-terminal section; belongs to the transferase hexapeptide repeat family. In terms of assembly, homotrimer. Mg(2+) is required as a cofactor.

It localises to the cytoplasm. The catalysed reaction is alpha-D-glucosamine 1-phosphate + acetyl-CoA = N-acetyl-alpha-D-glucosamine 1-phosphate + CoA + H(+). It carries out the reaction N-acetyl-alpha-D-glucosamine 1-phosphate + UTP + H(+) = UDP-N-acetyl-alpha-D-glucosamine + diphosphate. It participates in nucleotide-sugar biosynthesis; UDP-N-acetyl-alpha-D-glucosamine biosynthesis; N-acetyl-alpha-D-glucosamine 1-phosphate from alpha-D-glucosamine 6-phosphate (route II): step 2/2. Its pathway is nucleotide-sugar biosynthesis; UDP-N-acetyl-alpha-D-glucosamine biosynthesis; UDP-N-acetyl-alpha-D-glucosamine from N-acetyl-alpha-D-glucosamine 1-phosphate: step 1/1. The protein operates within bacterial outer membrane biogenesis; LPS lipid A biosynthesis. Its function is as follows. Catalyzes the last two sequential reactions in the de novo biosynthetic pathway for UDP-N-acetylglucosamine (UDP-GlcNAc). The C-terminal domain catalyzes the transfer of acetyl group from acetyl coenzyme A to glucosamine-1-phosphate (GlcN-1-P) to produce N-acetylglucosamine-1-phosphate (GlcNAc-1-P), which is converted into UDP-GlcNAc by the transfer of uridine 5-monophosphate (from uridine 5-triphosphate), a reaction catalyzed by the N-terminal domain. The polypeptide is Bifunctional protein GlmU (Exiguobacterium sibiricum (strain DSM 17290 / CCUG 55495 / CIP 109462 / JCM 13490 / 255-15)).